We begin with the raw amino-acid sequence, 572 residues long: Nuclear hormone receptor family member nhr-25 (572 aa).

The segment at residues 15–90 is a DNA-binding region (nuclear receptor); that stretch reads GEMCPVCGDR…MGMKMEAVRA (76 aa). 2 consecutive NR C4-type zinc fingers follow at residues 18–38 and 54–78; these read CPVC…CESC and CSAE…FQKC. The NR LBD domain maps to 307-567; that stretch reads PTEKTVDHFY…PTPQATYTAV (261 aa).

It belongs to the nuclear hormone receptor family. In terms of assembly, interacts with lin-39. Interacts with nob-1. Expressed in the epidermis, the developing somatic gonad, and a subset of other epithelial cells.

Its subcellular location is the nucleus. Functionally, orphan nuclear receptor and probable transcription activator, required during development. Plays a role in male tail tip morphogenesis regulating the expression of the transcription factor dmd-3 in a negative feedback loop. Regulates vulval precursor cell (VPC) differentiation, in concert with homeobox protein lin-39. Involved in promoting embryogenesis, in concert with homeobox protein nob-1. May play a role in modulation of lifespan and immunity. The polypeptide is Nuclear hormone receptor family member nhr-25 (Caenorhabditis elegans).